Reading from the N-terminus, the 624-residue chain is Ubiquitin-associated and SH3 domain-containing protein A (624 aa).

A UBA domain is found at 19-60 (RSTPSLLDPLLAMGFPTHTALKALAATGRKTAEAAADWLHGH). The region spanning 238-303 (VHYQTLKALF…PENYTERANE (66 aa)) is the SH3 domain. The segment at 358–624 (RRGILVVRHG…FNWRNWISSN (267 aa)) is phosphatase-like.

As to quaternary structure, homodimer or homooligomer. Interacts with CBL. Part of a complex containing CBL and activated EGFR. Interacts with ubiquitin and with mono-ubiquitinated proteins. Interacts with dynamin.

The protein localises to the cytoplasm. Its subcellular location is the nucleus. In terms of biological role, interferes with CBL-mediated down-regulation and degradation of receptor-type tyrosine kinases. Promotes accumulation of activated target receptors, such as T-cell receptors, EGFR and PDGFRB, on the cell surface. May inhibit dynamin-dependent endocytic pathways by functionally sequestering dynamin via its SH3 domain. Exhibits negligible protein tyrosine phosphatase activity at neutral pH. May act as a dominant-negative regulator of UBASH3B-dependent dephosphorylation. This chain is Ubiquitin-associated and SH3 domain-containing protein A (Ubash3a), found in Mus musculus (Mouse).